Here is an 83-residue protein sequence, read N- to C-terminus: Molybdopterin synthase sulfur carrier subunit (83 aa).

The protein belongs to the MoaD family.

It participates in cofactor biosynthesis; molybdopterin biosynthesis. Functionally, involved in sulfur transfer in the conversion of molybdopterin precursor Z to molybdopterin. Probably plays a role in host phagosome maturation arrest. The protein is Molybdopterin synthase sulfur carrier subunit (moaD1) of Mycobacterium tuberculosis (strain ATCC 25618 / H37Rv).